The following is a 659-amino-acid chain: Probable acyl-coenzyme A oxidase acox-1.5 (659 aa).

Residues 148-151, 156-157, and G190 each bind FAD; these read YAQT and GT. Substrate-binding positions include 284 to 287 and R294; that span reads KVGY. FAD contacts are provided by residues R319 and 339–342; that span reads QQYR. H395 and Q403 together coordinate ATP. Position 410 (G410) interacts with FAD. A substrate-binding site is contributed by 432–433; the sequence is YE. E433 acts as the Proton acceptor in catalysis. E435 lines the FAD pocket. 524–527 is a binding site for ATP; sequence KAAR. Residues 657–659 carry the Microbody targeting signal motif; the sequence is SKL.

This sequence belongs to the acyl-CoA oxidase family. Homodimer. Requires FAD as cofactor.

It is found in the peroxisome. It functions in the pathway lipid metabolism; peroxisomal fatty acid beta-oxidation. With respect to regulation, activated by ATP. ATP binding leads to a conformational change that promotes FAD cofactor binding and enzyme activity. ATP binding likely occurs during acox-1.5 folding and/or dimer formation. Functionally, involved in the first step of peroxisomal beta-oxidation by catalyzing the desaturation of fatty acid-derived side chains. This chain is Probable acyl-coenzyme A oxidase acox-1.5, found in Caenorhabditis elegans.